Consider the following 569-residue polypeptide: Proline--tRNA ligase (569 aa).

It belongs to the class-II aminoacyl-tRNA synthetase family. ProS type 1 subfamily. In terms of assembly, homodimer.

Its subcellular location is the cytoplasm. It catalyses the reaction tRNA(Pro) + L-proline + ATP = L-prolyl-tRNA(Pro) + AMP + diphosphate. In terms of biological role, catalyzes the attachment of proline to tRNA(Pro) in a two-step reaction: proline is first activated by ATP to form Pro-AMP and then transferred to the acceptor end of tRNA(Pro). As ProRS can inadvertently accommodate and process non-cognate amino acids such as alanine and cysteine, to avoid such errors it has two additional distinct editing activities against alanine. One activity is designated as 'pretransfer' editing and involves the tRNA(Pro)-independent hydrolysis of activated Ala-AMP. The other activity is designated 'posttransfer' editing and involves deacylation of mischarged Ala-tRNA(Pro). The misacylated Cys-tRNA(Pro) is not edited by ProRS. The chain is Proline--tRNA ligase from Shewanella loihica (strain ATCC BAA-1088 / PV-4).